The chain runs to 377 residues: Homoserine O-acetyltransferase (377 aa).

Residues 48 to 347 form the AB hydrolase-1 domain; that stretch reads NVVLIEHALT…PVGHDAFLTE (300 aa). The Nucleophile role is filled by Ser143. Arg213 is a binding site for substrate. Active-site residues include Asp311 and His341. Residue Asp342 participates in substrate binding.

Belongs to the AB hydrolase superfamily. MetX family. Homodimer.

The protein resides in the cytoplasm. It catalyses the reaction L-homoserine + acetyl-CoA = O-acetyl-L-homoserine + CoA. Its pathway is amino-acid biosynthesis; L-methionine biosynthesis via de novo pathway; O-acetyl-L-homoserine from L-homoserine: step 1/1. Functionally, transfers an acetyl group from acetyl-CoA to L-homoserine, forming acetyl-L-homoserine. The chain is Homoserine O-acetyltransferase from Corynebacterium efficiens (strain DSM 44549 / YS-314 / AJ 12310 / JCM 11189 / NBRC 100395).